A 464-amino-acid chain; its full sequence is Cysteine--tRNA ligase (464 aa).

Cys27 contributes to the Zn(2+) binding site. A 'HIGH' region motif is present at residues 29-39; sequence PTVYDDAHLGH. Residues Cys203, His234, and Glu238 each contribute to the Zn(2+) site. A 'KMSKS' region motif is present at residues 266–270; sequence KMSKS. Lys269 is a binding site for ATP.

The protein belongs to the class-I aminoacyl-tRNA synthetase family. Monomer. Requires Zn(2+) as cofactor.

It is found in the cytoplasm. The enzyme catalyses tRNA(Cys) + L-cysteine + ATP = L-cysteinyl-tRNA(Cys) + AMP + diphosphate. This is Cysteine--tRNA ligase from Campylobacter concisus (strain 13826).